A 953-amino-acid chain; its full sequence is Isoleucine--tRNA ligase (953 aa).

The 'HIGH' region signature appears at 57–67 (PYANGDIHIGH). Glu-582 contacts L-isoleucyl-5'-AMP. Positions 623-627 (KMSKS) match the 'KMSKS' region motif. Lys-626 provides a ligand contact to ATP. Zn(2+) is bound by residues Cys-916, Cys-919, Cys-936, and Cys-939.

This sequence belongs to the class-I aminoacyl-tRNA synthetase family. IleS type 1 subfamily. As to quaternary structure, monomer. It depends on Zn(2+) as a cofactor.

It localises to the cytoplasm. The catalysed reaction is tRNA(Ile) + L-isoleucine + ATP = L-isoleucyl-tRNA(Ile) + AMP + diphosphate. Catalyzes the attachment of isoleucine to tRNA(Ile). As IleRS can inadvertently accommodate and process structurally similar amino acids such as valine, to avoid such errors it has two additional distinct tRNA(Ile)-dependent editing activities. One activity is designated as 'pretransfer' editing and involves the hydrolysis of activated Val-AMP. The other activity is designated 'posttransfer' editing and involves deacylation of mischarged Val-tRNA(Ile). In Bordetella bronchiseptica (strain ATCC BAA-588 / NCTC 13252 / RB50) (Alcaligenes bronchisepticus), this protein is Isoleucine--tRNA ligase.